The sequence spans 190 residues: Xanthine phosphoribosyltransferase (190 aa).

Xanthine is bound by residues Leu-20 and Asn-27. Position 128 to 132 (128 to 132 (ANGNA)) interacts with 5-phospho-alpha-D-ribose 1-diphosphate. Lys-156 is a xanthine binding site.

Belongs to the purine/pyrimidine phosphoribosyltransferase family. Xpt subfamily. Homodimer.

Its subcellular location is the cytoplasm. The enzyme catalyses XMP + diphosphate = xanthine + 5-phospho-alpha-D-ribose 1-diphosphate. The protein operates within purine metabolism; XMP biosynthesis via salvage pathway; XMP from xanthine: step 1/1. In terms of biological role, converts the preformed base xanthine, a product of nucleic acid breakdown, to xanthosine 5'-monophosphate (XMP), so it can be reused for RNA or DNA synthesis. In Clostridium novyi (strain NT), this protein is Xanthine phosphoribosyltransferase.